Reading from the N-terminus, the 256-residue chain is EF-hand calcium-binding domain-containing protein 4A (256 aa).

Residues 1-10 show a composition bias toward basic residues; that stretch reads MAHLGSRRRM. The segment at 1 to 32 is disordered; that stretch reads MAHLGSRRRMSPGLRTRIAHRKAHRTPPSPLI. EF-hand domains are found at residues 41 to 69 and 71 to 106; these read KAHE…QNEL and LTPE…LLGV. Residues aspartate 84, serine 86, asparagine 88, tyrosine 90, and glutamate 95 each contribute to the Ca(2+) site. Residues 190-235 adopt a coiled-coil conformation; it reads IRDVHHEKDTLEQALKRKETDHGREVRCLYEEMEQQIKIERERLLK.

Belongs to the EFCAB4 family.

The sequence is that of EF-hand calcium-binding domain-containing protein 4A (cracr2b) from Xenopus tropicalis (Western clawed frog).